A 107-amino-acid polypeptide reads, in one-letter code: UPF0145 protein BT_3410 (107 aa).

The protein belongs to the UPF0145 family.

In Bacteroides thetaiotaomicron (strain ATCC 29148 / DSM 2079 / JCM 5827 / CCUG 10774 / NCTC 10582 / VPI-5482 / E50), this protein is UPF0145 protein BT_3410.